The primary structure comprises 121 residues: uncharacterized protein (121 aa).

Helical transmembrane passes span 26–46 (FIAL…ILVL) and 72–92 (AFLT…WLGL).

Its subcellular location is the membrane. This is an uncharacterized protein from Saccharomyces cerevisiae (strain ATCC 204508 / S288c) (Baker's yeast).